The primary structure comprises 296 residues: Acetyl-coenzyme A carboxylase carboxyl transferase subunit beta (296 aa).

In terms of domain architecture, CoA carboxyltransferase N-terminal spans 26 to 295 (VWTKCTNCEQ…PFKVGELIIE (270 aa)). C30, C33, C49, and C52 together coordinate Zn(2+). The segment at 30–52 (CTNCEQVLYSEELKRNMQVCPKC) adopts a C4-type zinc-finger fold.

Belongs to the AccD/PCCB family. In terms of assembly, acetyl-CoA carboxylase is a heterohexamer composed of biotin carboxyl carrier protein (AccB), biotin carboxylase (AccC) and two subunits each of ACCase subunit alpha (AccA) and ACCase subunit beta (AccD). Zn(2+) serves as cofactor.

It is found in the cytoplasm. It carries out the reaction N(6)-carboxybiotinyl-L-lysyl-[protein] + acetyl-CoA = N(6)-biotinyl-L-lysyl-[protein] + malonyl-CoA. It participates in lipid metabolism; malonyl-CoA biosynthesis; malonyl-CoA from acetyl-CoA: step 1/1. In terms of biological role, component of the acetyl coenzyme A carboxylase (ACC) complex. Biotin carboxylase (BC) catalyzes the carboxylation of biotin on its carrier protein (BCCP) and then the CO(2) group is transferred by the transcarboxylase to acetyl-CoA to form malonyl-CoA. In Haemophilus ducreyi (strain 35000HP / ATCC 700724), this protein is Acetyl-coenzyme A carboxylase carboxyl transferase subunit beta.